Here is a 371-residue protein sequence, read N- to C-terminus: RNA polymerase sigma factor SigA (371 aa).

Positions 137–207 (LAEANLRLVV…TRAIADQART (71 aa)) are sigma-70 factor domain-2. An Interaction with polymerase core subunit RpoC motif is present at residues 161-164 (DLIQ). The sigma-70 factor domain-3 stretch occupies residues 216 to 292 (ETINKLVREQ…DEVIENPVDY (77 aa)). The tract at residues 305–358 (VLDTLTDREENVLRLRFGLDDGKMRTLEDVGKVFDVTRERIRQIEAKALRKLRH) is sigma-70 factor domain-4. The segment at residues 331-350 (LEDVGKVFDVTRERIRQIEA) is a DNA-binding region (H-T-H motif).

Belongs to the sigma-70 factor family. RpoD/SigA subfamily. In terms of assembly, interacts transiently with the RNA polymerase catalytic core.

The protein resides in the cytoplasm. Sigma factors are initiation factors that promote the attachment of RNA polymerase to specific initiation sites and are then released. This sigma factor is the primary sigma factor during exponential growth. In Streptococcus mutans serotype c (strain ATCC 700610 / UA159), this protein is RNA polymerase sigma factor SigA.